We begin with the raw amino-acid sequence, 591 residues long: Protein kinase C zeta type (591 aa).

Residues 15–98 enclose the PB1 domain; sequence RVRLKAHYSG…DGLILHVFPS (84 aa). Residues 79-145 are interaction with SQSTM1; it reads AFRLAGQHRD…KRFNRRAYCG (67 aa). The segment at 130 to 180 adopts a Phorbol-ester/DAG-type zinc-finger fold; that stretch reads GHLFQAKRFNRRAYCGQCSERIWGLARQGYRCINCKLLVHKRCHGLVPLTC. Residues 251–517 form the Protein kinase domain; that stretch reads FDLIRVIGRG…FSDIKSHAFF (267 aa). ATP-binding positions include 257 to 265 and Lys-280; that span reads IGRGSYAKV. Asp-375 (proton acceptor) is an active-site residue. Thr-409 is subject to Phosphothreonine; by PDPK1 and PI3K. The AGC-kinase C-terminal domain maps to 518-589; sequence RSIDWDLLEK…INPLLLSTEE (72 aa). The residue at position 559 (Thr-559) is a Phosphothreonine. At Ser-590 the chain carries Phosphoserine.

This sequence belongs to the protein kinase superfamily. AGC Ser/Thr protein kinase family. PKC subfamily. Interacts with PARD6A, PARD6B and PARD6G. Part of a complex with PARD3, PARD6A or PARD6B or PARD6G and CDC42 or RAC1. Interacts with ADAP1/CENTA1. Interacts directly with SQSTM1. Forms a ternary complex with SQSTM1 and KCNAB2. Forms another ternary complex with SQSTM1 and GABRR3. Forms a complex with SQSTM1 and MAP2K5. Interacts (via the protein kinase domain) with WWC1. Forms a tripartite complex with WWC1 and DDR1, but predominantly in the absence of collagen. Component of the Par polarity complex, composed of at least phosphorylated PRKCZ, PARD3 and TIAM1. Interacts with PDPK1 (via N-terminal region). Interacts with WDFY2 (via WD repeats 1-3). Interacts with VAMP2. Forms a complex with WDFY2 and VAMP2. Interacts with APPL1. Interacts with WWC1, WWC2 and WWC3. CDH5 is required for its phosphorylation at Thr-409. Phosphorylated by protein kinase PDPK1; phosphorylation is inhibited by the apoptotic C-terminal cleavage product of PKN2. Phosphorylation at Thr-409 by PI3K activates the kinase.

Its subcellular location is the cytoplasm. It is found in the endosome. The protein localises to the cell junction. The protein resides in the membrane. The enzyme catalyses L-seryl-[protein] + ATP = O-phospho-L-seryl-[protein] + ADP + H(+). It carries out the reaction L-threonyl-[protein] + ATP = O-phospho-L-threonyl-[protein] + ADP + H(+). Atypical PKCs (PRKCI and PRKCZ) exhibit an elevated basal enzymatic activity (that may be due to the interaction with SMG1 or SQSTM1) and are not regulated by diacylglycerol, phosphatidylserine, phorbol esters or calcium ions. Two specific sites, Thr-409 (activation loop of the kinase domain) and Thr-559 (turn motif), need to be phosphorylated for its full activation. Phosphatidylinositol 3,4,5-trisphosphate might be a physiological activator. Functionally, calcium- and diacylglycerol-independent serine/threonine-protein kinase that functions in phosphatidylinositol 3-kinase (PI3K) pathway and mitogen-activated protein (MAP) kinase cascade, and is involved in NF-kappa-B activation, mitogenic signaling, cell proliferation, cell polarity, inflammatory response and maintenance of long-term potentiation (LTP). Upon lipopolysaccharide (LPS) treatment in macrophages, or following mitogenic stimuli, functions downstream of PI3K to activate MAP2K1/MEK1-MAPK1/ERK2 signaling cascade independently of RAF1 activation. Required for insulin-dependent activation of AKT3, but may function as an adapter rather than a direct activator. Upon insulin treatment may act as a downstream effector of PI3K and contribute to the activation of translocation of the glucose transporter SLC2A4/GLUT4 and subsequent glucose transport in adipocytes. In EGF-induced cells, binds and activates MAP2K5/MEK5-MAPK7/ERK5 independently of its kinase activity and can activate JUN promoter through MEF2C. Through binding with SQSTM1/p62, functions in interleukin-1 signaling and activation of NF-kappa-B with the specific adapters RIPK1 and TRAF6. Participates in TNF-dependent transactivation of NF-kappa-B by phosphorylating and activating IKBKB kinase, which in turn leads to the degradation of NF-kappa-B inhibitors. In migrating astrocytes, forms a cytoplasmic complex with PARD6A and is recruited by CDC42 to function in the establishment of cell polarity along with the microtubule motor and dynein. In association with FEZ1, stimulates neuronal differentiation in PC12 cells. In the inflammatory response, is required for the T-helper 2 (Th2) differentiation process, including interleukin production, efficient activation of JAK1 and the subsequent phosphorylation and nuclear translocation of STAT6. May be involved in development of allergic airway inflammation (asthma), a process dependent on Th2 immune response. In the NF-kappa-B-mediated inflammatory response, can relieve SETD6-dependent repression of NF-kappa-B target genes by phosphorylating the RELA subunit at 'Ser-311'. Phosphorylates VAMP2 in vitro. Phosphorylates and activates LRRK1, which phosphorylates RAB proteins involved in intracellular trafficking. The sequence is that of Protein kinase C zeta type (PRKCZ) from Oryctolagus cuniculus (Rabbit).